A 192-amino-acid chain; its full sequence is Fe/S biogenesis protein NfuA (192 aa).

The [4Fe-4S] cluster site is built by Cys-150 and Cys-153.

This sequence belongs to the NfuA family. As to quaternary structure, homodimer. It depends on [4Fe-4S] cluster as a cofactor.

In terms of biological role, involved in iron-sulfur cluster biogenesis. Binds a 4Fe-4S cluster, can transfer this cluster to apoproteins, and thereby intervenes in the maturation of Fe/S proteins. Could also act as a scaffold/chaperone for damaged Fe/S proteins. The chain is Fe/S biogenesis protein NfuA from Buchnera aphidicola subsp. Acyrthosiphon pisum (strain APS) (Acyrthosiphon pisum symbiotic bacterium).